The sequence spans 1057 residues: MDLLDKVMGEMGSKPGSTAKKPATSASSTPRTNVWGTAKKPSSQQQPPKPLFTTPGSQQGSLGGRIPKREHTDRTGPDPKRKPLGGLSVPDSFNNFGTFRVQMNAWNLDISKMDERISRIMFRATLVHTDGRRFELSLGVSAFSGDVNRQQRRQAQCLLFRAWFKRNPELFKGMTDPAIAAYDAAETIYVGCSFFDVELTEHVCHLTEADFSPQEWKIVSLISRRSGSTFEIRIKTNPPIYTRGPNALTLENRSELTRIIEAITDQCLHNEKFLLYSSGTFPTKGGDIASPDEVTLIKSGFVKTTKIVDRDGVPDAIMTVDTTKSPFYKDTSLLKFFTAKMDQLTNSGGGPRGHNGGRERRDGGGNSRKYDDRRSPRDGEIDYDERTVSHYQRQFQDERISDGMLNTLKQSLKGLDCQPIHLKDSKANRSIMIDEIHTGTADSVTFEQKLPDGEMKLTSITEYYLQRYNYRLKFPHLPLVTSKRAKCYDFYPMELMSILPGQRIKQSHMTVDIQSYMTGKMSSLPDQHIKQSKLVLTEYLKLGDQPANRQMDAFRVSLKSIQPIVTNAHWLSPPDMKFANNQLYSLNPTRGVRFQTNGKFVMPARVKSVTIINYDKEFNRNVDMFAEGLAKHCSEQGMKFDSRPNSWKKVNLGSSDRRGTKVEIEEAIRNGVTIVFGIIAEKRPDMHDILKYFEEKLGQQTIQISSETADKFMRDHGGKQTIDNVIRKLNPKCGGTNFLIDVPESVGHRVVCNNSAEMRAKLYAKTQFIGFEMSHTGARTRFDIQKVMFDGDPTVVGVAYSLKHSAQLGGFSYFQESRLHKLTNLQEKMQICLNAYEQSSSYLPETVVVYRVGSGEGDYPQIVNEVNEMKLAARKKKHGYNPKFLVICTQRNSHIRVFPEHINERGKSMEQNVKSGTCVDVPGASHGYEEFILCCQTPLIGTVKPTKYTIIVNDCRWSKNEIMNVTYHLAFAHQVSYAPPAIPNVSYAAQNLAKRGHNNYKTHTKLVDMNDYSYRIKEKHEEIISSEEVDDILMRDFIETVSNDLNAMTINGRNFWA.

2 disordered regions span residues 1 to 89 (MDLL…GLSV) and 344 to 388 (LTNS…ERTV). Residues 17-30 (STAKKPATSASSTP) show a composition bias toward low complexity. Composition is skewed to basic and acidic residues over residues 67-81 (PKRE…DPKR) and 356-388 (GGRE…ERTV). The PAZ domain maps to 387–500 (TVSHYQRQFQ…YPMELMSILP (114 aa)). The region spanning 677 to 1001 (GIIAEKRPDM…LAKRGHNNYK (325 aa)) is the Piwi domain.

The protein resides in the cytoplasm. The protein localises to the nucleus. In terms of biological role, transports small interfering RNAs (siRNAs) from the cytoplasm to the nucleus. Required for RNA interference (RNAi) in nuclei. Required for exogenous RNAi-induced H3K27 methylation. In Caenorhabditis elegans, this protein is Nuclear RNAi defective-3 protein (nrde-3).